The chain runs to 125 residues: Mini-ribonuclease 3 (125 aa).

Asp-11 is an active-site residue.

Belongs to the MrnC RNase family. As to quaternary structure, homodimer. Mg(2+) serves as cofactor.

It localises to the cytoplasm. Its function is as follows. Involved in correct processing of both the 5' and 3' ends of 23S rRNA precursor. Processes 30S rRNA precursor transcript even in absence of ribonuclease 3 (Rnc); Rnc processes 30S rRNA into smaller rRNA precursors. The chain is Mini-ribonuclease 3 from Acholeplasma laidlawii (strain PG-8A).